The primary structure comprises 432 residues: Adenylosuccinate synthetase (432 aa).

GTP-binding positions include 13 to 19 (GDEGKGK) and 41 to 43 (GHT). Asp-14 (proton acceptor) is an active-site residue. Mg(2+)-binding residues include Asp-14 and Gly-41. Residues 14–17 (DEGK), 39–42 (NAGH), Thr-130, Arg-144, Gln-225, Thr-240, and Arg-304 each bind IMP. The active-site Proton donor is His-42. 300-306 (AVTGRPR) is a binding site for substrate. GTP contacts are provided by residues Arg-306, 332–334 (KLD), and 415–417 (STG).

This sequence belongs to the adenylosuccinate synthetase family. As to quaternary structure, homodimer. The cofactor is Mg(2+).

It localises to the cytoplasm. The catalysed reaction is IMP + L-aspartate + GTP = N(6)-(1,2-dicarboxyethyl)-AMP + GDP + phosphate + 2 H(+). It participates in purine metabolism; AMP biosynthesis via de novo pathway; AMP from IMP: step 1/2. Functionally, plays an important role in the de novo pathway of purine nucleotide biosynthesis. Catalyzes the first committed step in the biosynthesis of AMP from IMP. This chain is Adenylosuccinate synthetase, found in Histophilus somni (strain 2336) (Haemophilus somnus).